Consider the following 582-residue polypeptide: MPLNTNNEKLTSKNVLNDRITKRFNDRRLFIVLLRFIIPSILVSFFAALYIFVDQIMIVKFVTRSDLNPDSIFDNDYFNFVDSNGQSWIYQDYLTASNNLKIPPFNINDLIRAAISISAPITVIINALTLLITMGLANQFSKALGRGDEEKIKEVWATGFITNVIVSIATSMIIVGVAKTWLTSSANGTMNRSLESLDTNSRYGYIVSIFFSRFRELQVQNASSYVYILAGLFTIQTFNQMYFLLNQSEGRQLFISIIPPLANLINILFDYLLIRYTSAGIAAAAYATVIGWSLSCLAYVIYNIVLIKKKATHLEYREIFRKGHFNWNYLYLIILIGLASFFRNAALSVSNGIFQTNLVTITEKIQPNLPPNYYQSIFGSVTPISNLMLQSVWGLIHGSRSLCGFKFGQRNFKDITKIYWYVPLIAFSYSSIVYLLFGFGLNNIFLINLFNIQGADNLVVSNLVLRITLVQSIFIALSMNAQLLFQSTQRIGMAWIASLMQGLFTFAPVFFTMYNLAIDTNNIYLYIWIQPINAILTCIGNWIISIPFAHKYREFVSKRFDIGTMLDKYLNKTKNPKVKAKQ.

12 helical membrane-spanning segments follow: residues 29-49, 117-137, 155-175, 225-245, 254-274, 287-307, 329-349, 376-396, 432-452, 458-478, 491-511, and 523-543; these read LFIVLLRFIIPSILVSFFAAL, ISAPITVIINALTLLITMGLA, VWATGFITNVIVSIATSMIIV, YVYILAGLFTIQTFNQMYFLL, FISIIPPLANLINILFDYLLI, ATVIGWSLSCLAYVIYNIVLI, YLYLIILIGLASFFRNAALSV, SIFGSVTPISNLMLQSVWGLI, IVYLLFGFGLNNIFLINLFNI, LVVSNLVLRITLVQSIFIALS, IGMAWIASLMQGLFTFAPVFF, and IYLYIWIQPINAILTCIGNWI.

The protein localises to the cell membrane. This is an uncharacterized protein from Mycoplasmoides gallisepticum (strain R(low / passage 15 / clone 2)) (Mycoplasma gallisepticum).